The following is a 221-amino-acid chain: Orotidine 5'-phosphate decarboxylase (221 aa).

Substrate is bound by residues Asp12, Lys34, 60 to 69, Ser117, 170 to 180, Gly193, and Arg194; these read DFKVADIPNT and PGVGAQGGKAS. The Proton donor role is filled by Lys62.

This sequence belongs to the OMP decarboxylase family. Type 1 subfamily. Homodimer.

It catalyses the reaction orotidine 5'-phosphate + H(+) = UMP + CO2. It participates in pyrimidine metabolism; UMP biosynthesis via de novo pathway; UMP from orotate: step 2/2. Its function is as follows. Catalyzes the decarboxylation of orotidine 5'-monophosphate (OMP) to uridine 5'-monophosphate (UMP). In Methanosarcina acetivorans (strain ATCC 35395 / DSM 2834 / JCM 12185 / C2A), this protein is Orotidine 5'-phosphate decarboxylase.